We begin with the raw amino-acid sequence, 195 residues long: AP-4-A phosphorylase (195 aa).

Residues 1–17 (MSDEDRTDRATEDHTIF) are compositionally biased toward basic and acidic residues. Positions 1-20 (MSDEDRTDRATEDHTIFDRG) are disordered. The HIT domain maps to 57–166 (PFTEIPQLSD…VPRWGGDANF (110 aa)). A Histidine triad motif motif is present at residues 151–155 (HLHVH). His-153 (tele-AMP-histidine intermediate) is an active-site residue.

As to quaternary structure, homotetramer. The cofactor is a divalent metal cation.

The enzyme catalyses ADP + ATP + H(+) = P(1),P(4)-bis(5'-adenosyl) tetraphosphate + phosphate. Functionally, catabolizes diadenosine 5',5'''-P1,P4-tetraphosphate (Ap4A) into ADP and ATP. This chain is AP-4-A phosphorylase, found in Mycobacterium tuberculosis (strain CDC 1551 / Oshkosh).